We begin with the raw amino-acid sequence, 262 residues long: Carbohydrate deacetylase (262 aa).

Histidine 129 lines the Mg(2+) pocket.

The protein belongs to the YdjC deacetylase family. In terms of assembly, homodimer. It depends on Mg(2+) as a cofactor.

Functionally, probably catalyzes the deacetylation of acetylated carbohydrates an important step in the degradation of oligosaccharides. The polypeptide is Carbohydrate deacetylase (Enterococcus faecalis (strain ATCC 700802 / V583)).